We begin with the raw amino-acid sequence, 359 residues long: Nicotinate N-methyltransferase 1 (359 aa).

Aspartate 226 provides a ligand contact to S-adenosyl-L-methionine.

The protein belongs to the class I-like SAM-binding methyltransferase superfamily. Cation-independent O-methyltransferase family. As to expression, highly expressed in anthers, pistils, developing siliques, and developing seeds.

It is found in the cytoplasm. Its subcellular location is the cytosol. It catalyses the reaction nicotinate + S-adenosyl-L-methionine = N-methylnicotinate + S-adenosyl-L-homocysteine. Functionally, involved in nicotinate detoxification in planta. Catalyzes the conversion of nicotinate to N-methylnicotinate, which is a detoxified form of endogenous nicotinate in planta. This is Nicotinate N-methyltransferase 1 from Arabidopsis thaliana (Mouse-ear cress).